A 119-amino-acid chain; its full sequence is Large ribosomal subunit protein eL8 (119 aa).

Belongs to the eukaryotic ribosomal protein eL8 family. Part of the 50S ribosomal subunit. Probably part of the RNase P complex.

The protein resides in the cytoplasm. Functionally, multifunctional RNA-binding protein that recognizes the K-turn motif in ribosomal RNA, the RNA component of RNase P, box H/ACA, box C/D and box C'/D' sRNAs. The polypeptide is Large ribosomal subunit protein eL8 (Archaeoglobus fulgidus (strain ATCC 49558 / DSM 4304 / JCM 9628 / NBRC 100126 / VC-16)).